We begin with the raw amino-acid sequence, 87 residues long: Small ribosomal subunit protein bS20 (87 aa).

This sequence belongs to the bacterial ribosomal protein bS20 family.

Its function is as follows. Binds directly to 16S ribosomal RNA. The chain is Small ribosomal subunit protein bS20 from Alkaliphilus oremlandii (strain OhILAs) (Clostridium oremlandii (strain OhILAs)).